Reading from the N-terminus, the 96-residue chain is Putative pterin-4-alpha-carbinolamine dehydratase (96 aa).

This sequence belongs to the pterin-4-alpha-carbinolamine dehydratase family.

It catalyses the reaction (4aS,6R)-4a-hydroxy-L-erythro-5,6,7,8-tetrahydrobiopterin = (6R)-L-erythro-6,7-dihydrobiopterin + H2O. In Prochlorococcus marinus (strain MIT 9215), this protein is Putative pterin-4-alpha-carbinolamine dehydratase.